The following is a 1372-amino-acid chain: DNA-directed RNA polymerase subunit beta (1372 aa).

The protein belongs to the RNA polymerase beta chain family. As to quaternary structure, the RNAP catalytic core consists of 2 alpha, 1 beta, 1 beta' and 1 omega subunit. When a sigma factor is associated with the core the holoenzyme is formed, which can initiate transcription.

The enzyme catalyses RNA(n) + a ribonucleoside 5'-triphosphate = RNA(n+1) + diphosphate. In terms of biological role, DNA-dependent RNA polymerase catalyzes the transcription of DNA into RNA using the four ribonucleoside triphosphates as substrates. The chain is DNA-directed RNA polymerase subunit beta from Bradyrhizobium sp. (strain BTAi1 / ATCC BAA-1182).